The chain runs to 204 residues: uncharacterized protein (204 aa).

A run of 4 helical transmembrane segments spans residues alanine 21–phenylalanine 50, phenylalanine 92–phenylalanine 114, leucine 150–isoleucine 172, and leucine 176–leucine 198.

The protein resides in the cell membrane. This is an uncharacterized protein from Aquifex aeolicus (strain VF5).